The chain runs to 367 residues: Peroxisome biogenesis protein 16 (367 aa).

Positions 135–173 (GGETPNEEKDSNQSESQNRAGNSGRNLGPHGLGNQNHHN) are disordered. A compositionally biased stretch (polar residues) spans 147-159 (QSESQNRAGNSGR). Transmembrane regions (helical) follow at residues 237–257 (ALFA…VLFI) and 264–284 (SWIP…LLAN).

This sequence belongs to the peroxin-16 family. Interacts with APEM9 (via both N- and C-terminus). The detection of an additional immunorelated polypeptide of 52 kDa suggests a post-translational modification of PEX16. As to expression, expressed in roots, siliques, seeds, cotyledons, leaves and flowers. Low expression in leaves and roots.

It is found in the peroxisome membrane. The protein resides in the endoplasmic reticulum membrane. Its function is as follows. Involved in the formation of peroxisomes, lipid bodies and protein bodies. In Arabidopsis thaliana (Mouse-ear cress), this protein is Peroxisome biogenesis protein 16.